The following is a 480-amino-acid chain: Bifunctional protein HldE (480 aa).

The segment at 1–316 (MNMHDFSKTK…EQLNASMRHQ (316 aa)) is ribokinase. An ATP-binding site is contributed by 192-195 (NQGE). The active site involves Asp261. Positions 342-480 (FTNGCFDLLH…EAEIKEGAAQ (139 aa)) are cytidylyltransferase.

This sequence in the N-terminal section; belongs to the carbohydrate kinase PfkB family. In the C-terminal section; belongs to the cytidylyltransferase family. In terms of assembly, homodimer.

The enzyme catalyses D-glycero-beta-D-manno-heptose 7-phosphate + ATP = D-glycero-beta-D-manno-heptose 1,7-bisphosphate + ADP + H(+). It catalyses the reaction D-glycero-beta-D-manno-heptose 1-phosphate + ATP + H(+) = ADP-D-glycero-beta-D-manno-heptose + diphosphate. It participates in nucleotide-sugar biosynthesis; ADP-L-glycero-beta-D-manno-heptose biosynthesis; ADP-L-glycero-beta-D-manno-heptose from D-glycero-beta-D-manno-heptose 7-phosphate: step 1/4. Its pathway is nucleotide-sugar biosynthesis; ADP-L-glycero-beta-D-manno-heptose biosynthesis; ADP-L-glycero-beta-D-manno-heptose from D-glycero-beta-D-manno-heptose 7-phosphate: step 3/4. Catalyzes the phosphorylation of D-glycero-D-manno-heptose 7-phosphate at the C-1 position to selectively form D-glycero-beta-D-manno-heptose-1,7-bisphosphate. In terms of biological role, catalyzes the ADP transfer from ATP to D-glycero-beta-D-manno-heptose 1-phosphate, yielding ADP-D-glycero-beta-D-manno-heptose. This chain is Bifunctional protein HldE, found in Hydrogenovibrio crunogenus (strain DSM 25203 / XCL-2) (Thiomicrospira crunogena).